The primary structure comprises 857 residues: MVNFTVDQIRAIMDKKANIRNMSVIAHVDHGKSTLTDSLVCKAGIIASARAGETRFTDTRKDEQERCITIKSTAISLFYELSENDLNFIKQSKDGAGFLINLIDSPGHVDFSSEVTAALRVTDGALVVVDCVSGVCVQTETVLRQAIAERIKPVLMMNKMDRALLELQLEPEELYQTFQRIVENVNVIISTYGEGESGPMGNIMIDPVLGTVGFGSGLHGWAFTLKQFAEMYVAKFAAKGEGQLGPAERAKKVEDMMKKLWGDRYFDPANGKFSKSATSPEGKKLPRTFCQLILDPIFKVFDAIMNFKKEETAKLIEKLDIKLDSEDKDKEGKPLLKAVMRRWLPAGDALLQMITIHLPSPVTAQKYRCELLYEGPPDDEAAMGIKSCDPKGPLMMYISKMVPTSDKGRFYAFGRVFSGLVSTGLKVRIMGPNYTPGKKEDLYLKPIQRTILMMGRYVEPIEDVPCGNIVGLVGVDQFLVKTGTITTFEHAHNMRVMKFSVSPVVRVAVEAKNPADLPKLVEGLKRLAKSDPMVQCIIEESGEHIIAGAGELHLEICLKDLEEDHACIPIKKSDPVVSYRETVSEESNVLCLSKSPNKHNRLYMKARPFPDGLAEDIDKGEVSARQELKQRARYLAEKYEWDVAEARKIWCFGPDGTGPNILTDITKGVQYLNEIKDSVVAGFQWATKEGALCEENMRGVRFDVHDVTLHADAIHRGGGQIIPTARRCLYASVLTAQPRLMEPIYLVEIQCPEQVVGGIYGVLNRKRGHVFEESQVAGTPMFVVKAYLPVNESFGFTADLRSNTGGQAFPQCVFDHWQILPGDPFDNSSRPSQVVAETRKRKGLKEIPALDNFLDKL.

One can recognise a tr-type G domain in the interval 17-362 (ANIRNMSVIA…MITIHLPSPV (346 aa)). 26 to 33 (AHVDHGKS) serves as a coordination point for GTP. Phosphothreonine is present on residues threonine 54, threonine 57, and threonine 59. Lysine 152 is modified (N6-succinyllysine). Residues 158–161 (NKMD) and 216–218 (SGL) each bind GTP. Lysine 235 carries the N6-acetyllysine modification. Lysine 239 bears the N6-acetyllysine; alternate mark. Residue lysine 239 forms a Glycyl lysine isopeptide (Lys-Gly) (interchain with G-Cter in SUMO1); alternate linkage. At tyrosine 265 the chain carries Phosphotyrosine. N6-acetyllysine; alternate is present on lysine 272. Lysine 272 bears the N6-succinyllysine; alternate mark. N6-acetyllysine is present on lysine 275. Residue lysine 322 forms a Glycyl lysine isopeptide (Lys-Gly) (interchain with G-Cter in SUMO) linkage. The residue at position 325 (serine 325) is a Phosphoserine. Tyrosine 373 carries the post-translational modification Phosphotyrosine. The residue at position 435 (threonine 435) is a Phosphothreonine. N6-acetyllysine occurs at positions 439 and 445. Residue serine 502 is modified to Phosphoserine. The residue at position 525 (lysine 525) is an N6,N6,N6-trimethyllysine. Lysine 529 participates in a covalent cross-link: Glycyl lysine isopeptide (Lys-Gly) (interchain with G-Cter in SUMO). An N6-succinyllysine modification is found at lysine 572. At serine 595 the chain carries Phosphoserine. N6-acetyllysine is present on lysine 619. Histidine 715 bears the Diphthamide mark.

It belongs to the GTP-binding elongation factor family. EF-G/EF-2 subfamily. Binds to 80S ribosomes. Actively translating ribosomes show mutually exclusive binding of eIF5a (EIF5A or EIF5A2) and EEF2/eEF2. Interacts with SERBP1; interaction sequesters EEF2/eEF2 at the A-site of the ribosome, thereby blocking the interaction sites of the mRNA-tRNA complex, promoting ribosome stabilization and hibernation. Interacts with HABP4; interaction takes place at the A-site of hibernating ribosomes and promotes ribosome stabilization. Component of the mRNA surveillance SURF complex, at least composed of ERF1, ERF3 (ERF3A or ERF3B), EEF2, UPF1/RENT1, SMG1, SMG8 and SMG9. Interacts with RBPMS2. Post-translationally, phosphorylation by EF-2 kinase completely inactivates EF-2; it requires prior phosphorylation by CDK2 at Ser-595 during mitotic prometaphase. Phosphorylation by CSK promotes SUMOylation, proteolytic cleavage, and nuclear translocation if the C-terminal fragment. In terms of processing, diphthamide is 2-[3-carboxyamido-3-(trimethyl-ammonio)propyl]histidine. ISGylated. Post-translationally, proteolytically processed at two sites following phosphorylation by CSK. In terms of processing, SUMOylated following phosphorylation by CSK, promotes proteolytic cleavage.

The protein resides in the cytoplasm. It is found in the nucleus. The enzyme catalyses GTP + H2O = GDP + phosphate + H(+). Catalyzes the GTP-dependent ribosomal translocation step during translation elongation. During this step, the ribosome changes from the pre-translocational (PRE) to the post-translocational (POST) state as the newly formed A-site-bound peptidyl-tRNA and P-site-bound deacylated tRNA move to the P and E sites, respectively. Catalyzes the coordinated movement of the two tRNA molecules, the mRNA and conformational changes in the ribosome. In Oryctolagus cuniculus (Rabbit), this protein is Elongation factor 2 (EEF2).